The chain runs to 478 residues: Protein nucleotidyltransferase YdiU (478 aa).

ATP-binding residues include Gly-84, Gly-86, Arg-87, Lys-107, Asp-119, Gly-120, Arg-170, and Arg-177. Catalysis depends on Asp-246, which acts as the Proton acceptor. Mg(2+) contacts are provided by Asn-247 and Asp-256. Position 256 (Asp-256) interacts with ATP.

Belongs to the SELO family. Requires Mg(2+) as cofactor. It depends on Mn(2+) as a cofactor.

It carries out the reaction L-seryl-[protein] + ATP = 3-O-(5'-adenylyl)-L-seryl-[protein] + diphosphate. The catalysed reaction is L-threonyl-[protein] + ATP = 3-O-(5'-adenylyl)-L-threonyl-[protein] + diphosphate. It catalyses the reaction L-tyrosyl-[protein] + ATP = O-(5'-adenylyl)-L-tyrosyl-[protein] + diphosphate. The enzyme catalyses L-histidyl-[protein] + UTP = N(tele)-(5'-uridylyl)-L-histidyl-[protein] + diphosphate. It carries out the reaction L-seryl-[protein] + UTP = O-(5'-uridylyl)-L-seryl-[protein] + diphosphate. The catalysed reaction is L-tyrosyl-[protein] + UTP = O-(5'-uridylyl)-L-tyrosyl-[protein] + diphosphate. Nucleotidyltransferase involved in the post-translational modification of proteins. It can catalyze the addition of adenosine monophosphate (AMP) or uridine monophosphate (UMP) to a protein, resulting in modifications known as AMPylation and UMPylation. This Escherichia coli (strain ATCC 8739 / DSM 1576 / NBRC 3972 / NCIMB 8545 / WDCM 00012 / Crooks) protein is Protein nucleotidyltransferase YdiU.